Consider the following 260-residue polypeptide: Adenosine 5'-phosphosulfate reductase (260 aa).

[4Fe-4S] cluster is bound by residues Cys130, Cys131, Cys213, and Cys216. The active-site Nucleophile; cysteine thiosulfonate intermediate is Cys241.

It belongs to the PAPS reductase family. CysH subfamily. Requires [4Fe-4S] cluster as cofactor.

It is found in the cytoplasm. It catalyses the reaction [thioredoxin]-disulfide + sulfite + AMP + 2 H(+) = adenosine 5'-phosphosulfate + [thioredoxin]-dithiol. It functions in the pathway sulfur metabolism; hydrogen sulfide biosynthesis; sulfite from sulfate. In terms of biological role, catalyzes the formation of sulfite from adenosine 5'-phosphosulfate (APS) using thioredoxin as an electron donor. In Agrobacterium fabrum (strain C58 / ATCC 33970) (Agrobacterium tumefaciens (strain C58)), this protein is Adenosine 5'-phosphosulfate reductase.